Here is a 548-residue protein sequence, read N- to C-terminus: Natural resistance-associated macrophage protein 1 (548 aa).

The tract at residues 1–38 is disordered; it reads MPGDMGPPKQGGTRYGSISSPPSPGPQQAPPGGTYLSE. Over 1–55 the chain is Cytoplasmic; sequence MPGDMGPPKQGGTRYGSISSPPSPGPQQAPPGGTYLSEKIPIPDTESGAFSLRKL. A helical transmembrane segment spans residues 56-73; that stretch reads WAFTGPGFLMSIAFLDPG. Residues 74-82 lie on the Extracellular side of the membrane; sequence NIESDLQAG. A helical membrane pass occupies residues 83–102; it reads AVAGFKLLWVLLWATVLGLL. Over 103 to 139 the chain is Cytoplasmic; the sequence is CQRLAARLGVVTGKDLGEVCHLYYPKVPRILLWLTIE. A helical transmembrane segment spans residues 140 to 160; that stretch reads LAIVGSDMQEVIGTAIAFSLL. Residues 161–164 are Extracellular-facing; that stretch reads SAGR. The chain crosses the membrane as a helical span at residues 165 to 184; that stretch reads IPLWGGVLITIVDTFFFLFL. Over 185–193 the chain is Cytoplasmic; the sequence is DNYGLRKLE. Residues 194 to 214 form a helical membrane-spanning segment; that stretch reads AFFGFLITIMALTFGYEYVVA. The Extracellular segment spans residues 215-237; the sequence is RPAQGALLQGLFLPSCAGCGQPE. Residues 238–256 traverse the membrane as a helical segment; the sequence is LLQAVGIVGAIIMPHNIYL. Over 257–284 the chain is Cytoplasmic; the sequence is HSSLVKSREVDRSRRADIREANMYFLIE. A helical transmembrane segment spans residues 285–304; it reads ATIALSVSFLINLFVMAVFG. At 305-346 the chain is on the extracellular side; the sequence is QAFYKQTNQAAFNICANSSLHDYATIFPRNNLTVAVDIYQGG. N-linked (GlcNAc...) asparagine glycosylation is found at asparagine 321 and asparagine 335. Residues 347–366 form a helical membrane-spanning segment; the sequence is VILGCLFGPAALYIWAVGLL. Residues 367 to 397 are Cytoplasmic-facing; that stretch reads AAGQSSTMTGTYAGQFVMEGFLKLRWSRFAR. A helical transmembrane segment spans residues 398 to 415; that stretch reads VLLTRSCAILPTVLVAVF. The Extracellular segment spans residues 416 to 426; the sequence is RDLRDLSGLND. The chain crosses the membrane as a helical span at residues 427–447; the sequence is LLNVLQSLLLPFAVLPILTFT. Over 448 to 463 the chain is Cytoplasmic; the sequence is SMPAVMQEFANGLVSK. Residues 464–485 form a helical membrane-spanning segment; that stretch reads VISSSIMVLVCAVNLYFVISYV. The Extracellular portion of the chain corresponds to 486 to 493; it reads PSLPHPDY. Residues 494–513 form a helical membrane-spanning segment; that stretch reads FSLVALLAAAYLGLTTYLVW. The Cytoplasmic segment spans residues 514-548; the sequence is TCLITQGATLLAHSSHQRFLYGLPEEDQENGRTSG.

The protein belongs to the NRAMP family.

The protein resides in the late endosome membrane. The protein localises to the lysosome membrane. The enzyme catalyses Zn(2+)(in) + H(+)(out) = Zn(2+)(out) + H(+)(in). It carries out the reaction Fe(2+)(in) + H(+)(out) = Fe(2+)(out) + H(+)(in). The catalysed reaction is Mn(2+)(in) + H(+)(out) = Mn(2+)(out) + H(+)(in). Macrophage-specific antiporter that fluxes metal ions in either direction against a proton gradient. Localized to late endosomal lysosomal membranes, delivers bivalent cations from the cytosol into these acidic compartments where they may directly affect antimicrobial activity. Involved in iron metabolism and host natural resistance to infection with intracellular parasites. Pathogen resistance involves sequestration of Fe(2+) and Mn(2+), cofactors of both prokaryotic and eukaryotic catalases and superoxide dismutases, not only to protect the macrophage against its own generation of reactive oxygen species, but to deny the cations to the pathogen for synthesis of its protective enzymes. The sequence is that of Natural resistance-associated macrophage protein 1 (SLC11A1) from Cervus elaphus (Red deer).